The primary structure comprises 352 residues: Speedy protein E18 (352 aa).

Over residues 1–12 (MDRTKTRFRKRG) the composition is skewed to basic residues. A disordered region spans residues 1–90 (MDRTKTRFRK…EPEKELAPEP (90 aa)). A compositionally biased stretch (polar residues) spans 16–39 (GKITTSRQPHPQNEQSLQRSTSGY). Residues 76–90 (DESEEEPEKELAPEP) show a composition bias toward acidic residues.

Belongs to the Speedy/Ringo family.

The chain is Speedy protein E18 from Homo sapiens (Human).